We begin with the raw amino-acid sequence, 222 residues long: Pyridoxine/pyridoxamine 5'-phosphate oxidase (222 aa).

FMN contacts are provided by residues 71–76 (RMVLLK), 86–87 (YT), Lys93, and Gln115. Lys76 serves as a coordination point for substrate. Residues Tyr133, Arg137, and Ser141 each coordinate substrate. FMN-binding positions include 150–151 (QS) and Trp195. Residue 201-203 (RLH) participates in substrate binding. Arg205 is a binding site for FMN.

Belongs to the pyridoxamine 5'-phosphate oxidase family. In terms of assembly, homodimer. It depends on FMN as a cofactor.

The catalysed reaction is pyridoxamine 5'-phosphate + O2 + H2O = pyridoxal 5'-phosphate + H2O2 + NH4(+). It carries out the reaction pyridoxine 5'-phosphate + O2 = pyridoxal 5'-phosphate + H2O2. It participates in cofactor metabolism; pyridoxal 5'-phosphate salvage; pyridoxal 5'-phosphate from pyridoxamine 5'-phosphate: step 1/1. The protein operates within cofactor metabolism; pyridoxal 5'-phosphate salvage; pyridoxal 5'-phosphate from pyridoxine 5'-phosphate: step 1/1. Functionally, catalyzes the oxidation of either pyridoxine 5'-phosphate (PNP) or pyridoxamine 5'-phosphate (PMP) into pyridoxal 5'-phosphate (PLP). This Caulobacter vibrioides (strain ATCC 19089 / CIP 103742 / CB 15) (Caulobacter crescentus) protein is Pyridoxine/pyridoxamine 5'-phosphate oxidase.